The chain runs to 347 residues: tRNA N6-adenosine threonylcarbamoyltransferase (347 aa).

The Fe cation site is built by histidine 110 and histidine 114. Substrate is bound by residues 133-137 (VVSGG), aspartate 168, glycine 181, aspartate 185, and asparagine 277. Residue aspartate 305 coordinates Fe cation.

It belongs to the KAE1 / TsaD family. Fe(2+) serves as cofactor.

It is found in the cytoplasm. The catalysed reaction is L-threonylcarbamoyladenylate + adenosine(37) in tRNA = N(6)-L-threonylcarbamoyladenosine(37) in tRNA + AMP + H(+). In terms of biological role, required for the formation of a threonylcarbamoyl group on adenosine at position 37 (t(6)A37) in tRNAs that read codons beginning with adenine. Is involved in the transfer of the threonylcarbamoyl moiety of threonylcarbamoyl-AMP (TC-AMP) to the N6 group of A37, together with TsaE and TsaB. TsaD likely plays a direct catalytic role in this reaction. This chain is tRNA N6-adenosine threonylcarbamoyltransferase, found in Kineococcus radiotolerans (strain ATCC BAA-149 / DSM 14245 / SRS30216).